The following is a 112-amino-acid chain: ATP-dependent Clp protease adapter protein ClpS (112 aa).

It belongs to the ClpS family. Binds to the N-terminal domain of the chaperone ClpA.

In terms of biological role, involved in the modulation of the specificity of the ClpAP-mediated ATP-dependent protein degradation. This Rhodococcus opacus (strain B4) protein is ATP-dependent Clp protease adapter protein ClpS.